Here is a 177-residue protein sequence, read N- to C-terminus: NADH-quinone oxidoreductase subunit B (177 aa).

[4Fe-4S] cluster-binding residues include Cys-36, Cys-37, Cys-101, and Cys-130.

The protein belongs to the complex I 20 kDa subunit family. NDH-1 is composed of 14 different subunits. Subunits NuoB, C, D, E, F, and G constitute the peripheral sector of the complex. It depends on [4Fe-4S] cluster as a cofactor.

Its subcellular location is the cell inner membrane. The enzyme catalyses a quinone + NADH + 5 H(+)(in) = a quinol + NAD(+) + 4 H(+)(out). In terms of biological role, NDH-1 shuttles electrons from NADH, via FMN and iron-sulfur (Fe-S) centers, to quinones in the respiratory chain. The immediate electron acceptor for the enzyme in this species is believed to be ubiquinone. Couples the redox reaction to proton translocation (for every two electrons transferred, four hydrogen ions are translocated across the cytoplasmic membrane), and thus conserves the redox energy in a proton gradient. The protein is NADH-quinone oxidoreductase subunit B of Hydrogenobaculum sp. (strain Y04AAS1).